A 260-amino-acid polypeptide reads, in one-letter code: MELVRQNNPLIHCMTNDVVMNFTANGLLAIGASPVMAFSAAETEDMASVADALLLNIGTPSNEGVDSMVLAGKAANRAGKPVIFDPVGVGATPFRNEISKRILNEVDVAVVRGNAGEIAALLGQAGTVKGVDGKINADVKELCLQAAKALRTVVVVTGEVDAVSNGEQLVAVANGHEWLTKVVGTGCLLGGVIAAYAAVQPNSLVDAAVEALAFYGVCAEQAYEQTKKEGIGSFQQTFLNELGNMTDEKAAALKRVEQIC.

M36 lines the substrate pocket. ATP-binding residues include R112 and T157. G184 contributes to the substrate binding site.

This sequence belongs to the Thz kinase family. Mg(2+) is required as a cofactor.

It carries out the reaction 5-(2-hydroxyethyl)-4-methylthiazole + ATP = 4-methyl-5-(2-phosphooxyethyl)-thiazole + ADP + H(+). It participates in cofactor biosynthesis; thiamine diphosphate biosynthesis; 4-methyl-5-(2-phosphoethyl)-thiazole from 5-(2-hydroxyethyl)-4-methylthiazole: step 1/1. In terms of biological role, catalyzes the phosphorylation of the hydroxyl group of 4-methyl-5-beta-hydroxyethylthiazole (THZ). The protein is Hydroxyethylthiazole kinase of Shouchella clausii (strain KSM-K16) (Alkalihalobacillus clausii).